The primary structure comprises 182 residues: UPF0397 protein VS_II0189 (182 aa).

Transmembrane regions (helical) follow at residues 8 to 28 (VVVI…MFGV), 41 to 61 (AVLA…VGFI), 72 to 92 (WGVW…IGLF), 110 to 130 (FALF…SSAF), and 146 to 166 (QLSI…FLIL).

Belongs to the UPF0397 family.

The protein localises to the cell membrane. This chain is UPF0397 protein VS_II0189, found in Vibrio atlanticus (strain LGP32) (Vibrio splendidus (strain Mel32)).